We begin with the raw amino-acid sequence, 165 residues long: (2E)-enoyl-[ACP] glycyltransferase (165 aa).

Belongs to the FcoT family.

The enzyme catalyses a (3R)-3-[(carboxymethyl)amino]fatty acid + holo-[ACP] + H(+) = a (2E)-enoyl-[ACP] + glycine + H2O. The catalysed reaction is (3R)-3-[(carboxymethyl)amino]butanoate + holo-[ACP] + H(+) = (2E)-butenoyl-[ACP] + glycine + H2O. Functionally, involved in the biosynthesis of a unique class of isonitrile lipopeptides (INLPs). Catalyzes a Michael addition of glycine to the beta-position of an alpha,beta-unsaturated fatty acyl-[ACP], producing a (3R)-3-[(carboxymethyl)amino]fatty acid. Acts on the (2E)-butenoyl moiety loaded on the acyl-carrier protein ScoB, forming the product (3R)-3-[(carboxymethyl)amino]butanoate released from ScoB. The chain is (2E)-enoyl-[ACP] glycyltransferase from Streptomyces coeruleorubidus.